The primary structure comprises 428 residues: Histidinol dehydrogenase (428 aa).

NAD(+)-binding residues include tyrosine 126, glutamine 188, and asparagine 211. Substrate contacts are provided by serine 234, glutamine 256, and histidine 259. Residues glutamine 256 and histidine 259 each contribute to the Zn(2+) site. Catalysis depends on proton acceptor residues glutamate 324 and histidine 325. Substrate-binding residues include histidine 325, aspartate 358, glutamate 412, and histidine 417. Aspartate 358 serves as a coordination point for Zn(2+). Histidine 417 lines the Zn(2+) pocket.

The protein belongs to the histidinol dehydrogenase family. Zn(2+) serves as cofactor.

The catalysed reaction is L-histidinol + 2 NAD(+) + H2O = L-histidine + 2 NADH + 3 H(+). It functions in the pathway amino-acid biosynthesis; L-histidine biosynthesis; L-histidine from 5-phospho-alpha-D-ribose 1-diphosphate: step 9/9. Catalyzes the sequential NAD-dependent oxidations of L-histidinol to L-histidinaldehyde and then to L-histidine. In Chlorobaculum tepidum (strain ATCC 49652 / DSM 12025 / NBRC 103806 / TLS) (Chlorobium tepidum), this protein is Histidinol dehydrogenase.